A 176-amino-acid polypeptide reads, in one-letter code: ATP-dependent protease subunit HslV (176 aa).

Residue threonine 5 is part of the active site. Serine 161, cysteine 164, and threonine 167 together coordinate Na(+).

This sequence belongs to the peptidase T1B family. HslV subfamily. As to quaternary structure, a double ring-shaped homohexamer of HslV is capped on each side by a ring-shaped HslU homohexamer. The assembly of the HslU/HslV complex is dependent on binding of ATP.

It localises to the cytoplasm. The catalysed reaction is ATP-dependent cleavage of peptide bonds with broad specificity.. Its activity is regulated as follows. Allosterically activated by HslU binding. In terms of biological role, protease subunit of a proteasome-like degradation complex believed to be a general protein degrading machinery. The protein is ATP-dependent protease subunit HslV of Desulfitobacterium hafniense (strain Y51).